Here is a 553-residue protein sequence, read N- to C-terminus: Putative transport protein KPK_0013 (553 aa).

The next 5 helical transmembrane spans lie at 4–24 (IALT…IGNV), 28–48 (GVGF…HFVD), 65–85 (FGLI…FFAS), 95–115 (LFAI…HKLF), and 158–178 (MSYA…MWLV). 2 consecutive RCK C-terminal domains span residues 192 to 276 (RFEE…VIGQ) and 279 to 361 (ATSL…ELGN). Transmembrane regions (helical) follow at residues 371 to 391 (MLPV…PLFI), 403 to 425 (AGGP…LYWF), 437 to 457 (LGIV…FVAT), 464 to 484 (LSWI…VGIL), 493 to 513 (YLTL…LAFA), and 532 to 552 (PLVM…FWGL).

The protein belongs to the AAE transporter (TC 2.A.81) family. YidE subfamily.

The protein resides in the cell membrane. This is Putative transport protein KPK_0013 from Klebsiella pneumoniae (strain 342).